Reading from the N-terminus, the 375-residue chain is Chaperone protein DnaJ (375 aa).

Residues D5 to G69 enclose the J domain. Residues G132–R214 form a CR-type zinc finger. Positions 145, 148, 162, 165, 188, 191, 202, and 205 each coordinate Zn(2+). CXXCXGXG motif repeat units lie at residues C145–G152, C162–G169, C188–G195, and C202–G209.

The protein belongs to the DnaJ family. Homodimer. Requires Zn(2+) as cofactor.

The protein localises to the cytoplasm. In terms of biological role, participates actively in the response to hyperosmotic and heat shock by preventing the aggregation of stress-denatured proteins and by disaggregating proteins, also in an autonomous, DnaK-independent fashion. Unfolded proteins bind initially to DnaJ; upon interaction with the DnaJ-bound protein, DnaK hydrolyzes its bound ATP, resulting in the formation of a stable complex. GrpE releases ADP from DnaK; ATP binding to DnaK triggers the release of the substrate protein, thus completing the reaction cycle. Several rounds of ATP-dependent interactions between DnaJ, DnaK and GrpE are required for fully efficient folding. Also involved, together with DnaK and GrpE, in the DNA replication of plasmids through activation of initiation proteins. This chain is Chaperone protein DnaJ, found in Bacillus licheniformis (strain ATCC 14580 / DSM 13 / JCM 2505 / CCUG 7422 / NBRC 12200 / NCIMB 9375 / NCTC 10341 / NRRL NRS-1264 / Gibson 46).